We begin with the raw amino-acid sequence, 595 residues long: Aspartate--tRNA ligase (595 aa).

Glu180 lines the L-aspartate pocket. The aspartate stretch occupies residues 204-207 (QLFK). L-aspartate is bound at residue Arg226. ATP-binding positions include 226 to 228 (RDE) and Gln235. An L-aspartate-binding site is contributed by His454. Glu488 lines the ATP pocket. Arg495 contributes to the L-aspartate binding site. ATP is bound at residue 540–543 (GLDR).

The protein belongs to the class-II aminoacyl-tRNA synthetase family. Type 1 subfamily. In terms of assembly, homodimer.

The protein resides in the cytoplasm. It catalyses the reaction tRNA(Asp) + L-aspartate + ATP = L-aspartyl-tRNA(Asp) + AMP + diphosphate. Its function is as follows. Catalyzes the attachment of L-aspartate to tRNA(Asp) in a two-step reaction: L-aspartate is first activated by ATP to form Asp-AMP and then transferred to the acceptor end of tRNA(Asp). The protein is Aspartate--tRNA ligase of Clostridium acetobutylicum (strain ATCC 824 / DSM 792 / JCM 1419 / IAM 19013 / LMG 5710 / NBRC 13948 / NRRL B-527 / VKM B-1787 / 2291 / W).